Consider the following 170-residue polypeptide: Myelin-associated oligodendrocyte basic protein (170 aa).

A disordered region spans residues 69–170; sequence SRRATSPQRP…GSPTRAPRFW (102 aa). The span at 82–92 shows a compositional bias: low complexity; it reads PAASPVVVRAP. 3 positions are modified to phosphoserine: serine 85, serine 98, and serine 107. 2 repeat units span residues 93 to 101 and 105 to 110. Residues 93 to 115 form a 3 X 9 AA approximate tandem repeats region; that stretch reads PAKPKSPLMPAKPRSPPRPAKPR. One copy of the 3; half-length repeat lies at 111 to 115; it reads PAKPR. Positions 118–130 are enriched in basic and acidic residues; sequence SRTERQPRPRPEV. Residues 138–151 show a composition bias toward low complexity; sequence KPPQKSKQPARSSP.

The protein resides in the cytoplasm. It is found in the perinuclear region. In terms of biological role, may play a role in compacting or stabilizing the myelin sheath possibly by binding the negatively charged acidic phospholipids of the cytoplasmic membrane. The chain is Myelin-associated oligodendrocyte basic protein (Mobp) from Mus musculus (Mouse).